The following is a 196-amino-acid chain: MINKIYGKIVDKKESSIIILAFPFEFEILVSSFCKMELRLLEDVEILTYFHFRDDDVKLFGFLNISEREVFEDLIGVDGIGPKAALKILSGIKYDAFRLAIAKEDINLISKVKGIGNKIAGKIFLKLRGKLVKGDESSSYMLKFKELEQSIVNMGFDRKLVVVAFREIMLSDKFLILKEAEQEQFLFTETLKRLSV.

Positions 1-63 are domain I; sequence MINKIYGKIV…DDDVKLFGFL (63 aa). The interval 64–142 is domain II; that stretch reads NISEREVFED…KGDESSSYML (79 aa). Position 143 (lysine 143) is a region of interest, flexible linker. The interval 143–196 is domain III; that stretch reads KFKELEQSIVNMGFDRKLVVVAFREIMLSDKFLILKEAEQEQFLFTETLKRLSV.

It belongs to the RuvA family. In terms of assembly, homotetramer. Forms an RuvA(8)-RuvB(12)-Holliday junction (HJ) complex. HJ DNA is sandwiched between 2 RuvA tetramers; dsDNA enters through RuvA and exits via RuvB. An RuvB hexamer assembles on each DNA strand where it exits the tetramer. Each RuvB hexamer is contacted by two RuvA subunits (via domain III) on 2 adjacent RuvB subunits; this complex drives branch migration. In the full resolvosome a probable DNA-RuvA(4)-RuvB(12)-RuvC(2) complex forms which resolves the HJ.

Its subcellular location is the cytoplasm. Its function is as follows. The RuvA-RuvB-RuvC complex processes Holliday junction (HJ) DNA during genetic recombination and DNA repair, while the RuvA-RuvB complex plays an important role in the rescue of blocked DNA replication forks via replication fork reversal (RFR). RuvA specifically binds to HJ cruciform DNA, conferring on it an open structure. The RuvB hexamer acts as an ATP-dependent pump, pulling dsDNA into and through the RuvAB complex. HJ branch migration allows RuvC to scan DNA until it finds its consensus sequence, where it cleaves and resolves the cruciform DNA. This Borrelia duttonii (strain Ly) protein is Holliday junction branch migration complex subunit RuvA.